A 566-amino-acid polypeptide reads, in one-letter code: Membrane protein insertase YidC (566 aa).

Residues 6–26 (NLLLLALLFVSFLLYTAWVEE) form a helical membrane-spanning segment. Positions 30 to 80 (QVAPQVQTEQVDSSVPASVASSANSANLSDGVPNSPQQSSTDATSTELPAS) are disordered. Residues 31 to 41 (VAPQVQTEQVD) are compositionally biased toward polar residues. The span at 42–58 (SSVPASVASSANSANLS) shows a compositional bias: low complexity. Over residues 61–80 (VPNSPQQSSTDATSTELPAS) the composition is skewed to polar residues. Helical transmembrane passes span 356-376 (LLLF…LITF), 433-453 (LGGC…YWSL), 471-491 (LSVQ…MFFI), and 510-530 (FMPV…VLYW).

This sequence belongs to the OXA1/ALB3/YidC family. Type 1 subfamily. In terms of assembly, interacts with the Sec translocase complex via SecD. Specifically interacts with transmembrane segments of nascent integral membrane proteins during membrane integration.

The protein resides in the cell inner membrane. Functionally, required for the insertion and/or proper folding and/or complex formation of integral membrane proteins into the membrane. Involved in integration of membrane proteins that insert both dependently and independently of the Sec translocase complex, as well as at least some lipoproteins. Aids folding of multispanning membrane proteins. This chain is Membrane protein insertase YidC, found in Psychromonas ingrahamii (strain DSM 17664 / CCUG 51855 / 37).